A 270-amino-acid chain; its full sequence is UPF0354 protein BT9727_4425 (270 aa).

It belongs to the UPF0354 family.

The polypeptide is UPF0354 protein BT9727_4425 (Bacillus thuringiensis subsp. konkukian (strain 97-27)).